A 391-amino-acid chain; its full sequence is Glycerol-3-phosphate dehydrogenase [NAD(+)] 1 (391 aa).

NAD(+) is bound by residues 41 to 46 (GSGNWG), F129, K152, and A185. K152 provides a ligand contact to substrate. K245 acts as the Proton acceptor in catalysis. R310 and Q339 together coordinate NAD(+). 310–311 (RN) contributes to the substrate binding site.

This sequence belongs to the NAD-dependent glycerol-3-phosphate dehydrogenase family.

Its subcellular location is the cytoplasm. It catalyses the reaction sn-glycerol 3-phosphate + NAD(+) = dihydroxyacetone phosphate + NADH + H(+). This is Glycerol-3-phosphate dehydrogenase [NAD(+)] 1 (GPD1) from Saccharomyces uvarum (Yeast).